The following is a 248-amino-acid chain: DNA repair protein RecO (248 aa).

Belongs to the RecO family.

In terms of biological role, involved in DNA repair and RecF pathway recombination. The polypeptide is DNA repair protein RecO (Bradyrhizobium sp. (strain BTAi1 / ATCC BAA-1182)).